The following is a 335-amino-acid chain: MNTEATHDQNEALTTGARLRNAREQLGLSQQAVAERLCLKVSTVRDIEEDKAPADLASTFLRGYIRSYARLVHIPEEELLPGLEKQAPLRAAKVAPVQSFSLGKRRKKRDGWLMTFTWLVLFVVIGLSGAWWWQDHKAQQEEITTMADQSSAELNNNQSQSVPLDTSTTTDQAMATTPTSPVDTTATNTQTPAVTAPAPAVDPQQNAVVPPSQANVDTAATPAPAATTTPDGAAPLPTDQAGVTTPAVDPNALVMNFTADCWLEVTDATGKKLFSGMQRKDGNLNLTGQAPYKLKIGAPAAVQIQYQGKPVDLSRFIRTNQVARLTLNAEQSPAQ.

The Cytoplasmic portion of the chain corresponds to 1–111 (MNTEATHDQN…LGKRRKKRDG (111 aa)). An HTH cro/C1-type domain is found at 19-71 (LRNAREQLGLSQQAVAERLCLKVSTVRDIEEDKAPADLASTFLRGYIRSYARL). The H-T-H motif DNA-binding region spans 30–49 (QQAVAERLCLKVSTVRDIEE). A helical; Signal-anchor for type II membrane protein membrane pass occupies residues 112–132 (WLMTFTWLVLFVVIGLSGAWW). The Periplasmic segment spans residues 133 to 335 (WQDHKAQQEE…TLNAEQSPAQ (203 aa)). Residues 148–164 (DQSSAELNNNQSQSVPL) show a composition bias toward polar residues. The tract at residues 148-244 (DQSSAELNNN…PLPTDQAGVT (97 aa)) is disordered. 2 stretches are compositionally biased toward low complexity: residues 165–205 (DTST…DPQQ) and 217–239 (DTAATPAPAATTTPDGAAPLPTD).

This sequence belongs to the RodZ family.

The protein resides in the cell inner membrane. Its function is as follows. Cytoskeletal protein that is involved in cell-shape control through regulation of the length of the long axis. In Escherichia coli O6:H1 (strain CFT073 / ATCC 700928 / UPEC), this protein is Cytoskeleton protein RodZ.